The following is a 450-amino-acid chain: UDP-N-acetylglucosamine--peptide N-acetylglucosaminyltransferase stabilizing protein GtfB (450 aa).

Belongs to the GtfB family. In terms of assembly, forms a heterotetramer with 2 subunits each of GtfA and GtfB. Part of the accessory SecA2/SecY2 protein translocation apparatus required to export cell wall protein GspB.

The protein resides in the cell membrane. It participates in protein modification; protein glycosylation. In terms of biological role, required for polymorphic O-glycosylation of GspB, a serine-rich repeat cell wall protein encoded upstream in the same operon. A substrate-binding protein that is part of the accessory SecA2/SecY2 system specifically required to export GspB. The GtfA-GtfB complex adds GlcNAc from UDP-GlcNAc to GspB, attaching the first sugar residue. Upon coexpression in E.coli with GtfA glycosylates GspB constructs. Binds the GspB protein substrate; alone this subunit only recognizes partially glycosylated GspB, but is constrained by GtfA to also recognize unglycosylated protein. The enzyme probably modifies its tertiary conformation by opening and closing its intersubunit interfaces to accomodate the increasingly glycosylated substrate. The chain is UDP-N-acetylglucosamine--peptide N-acetylglucosaminyltransferase stabilizing protein GtfB from Streptococcus gordonii.